The primary structure comprises 116 residues: Classical arabinogalactan protein 25 (116 aa).

The N-terminal stretch at 1–28 is a signal peptide; it reads MAFSFLNKLLIIFIFIFISLSSSSPTIS. The segment at 40–95 is disordered; that stretch reads LLPSPGDALPSDDGSGTIPSSPSPPDPDTNDGSYPDPLAFSPFASPPVSSPSPPPS. Composition is skewed to low complexity over residues 50–59 and 69–82; these read SDDGSGTIPS and NDGS…FSPF. Over residues 83–95 the composition is skewed to pro residues; it reads ASPPVSSPSPPPS. S89 carries the GPI-anchor amidated serine lipid modification. Residues 90 to 116 constitute a propeptide, removed in mature form; sequence PSPPPSLPSAGVLLISLIISSASFLAL.

This sequence belongs to the classical AGP family. O-glycosylated on the hydroxyproline residues.

The protein resides in the cell membrane. In terms of biological role, proteoglycan that seems to be implicated in diverse developmental roles such as differentiation, cell-cell recognition, embryogenesis and programmed cell death. In Arabidopsis thaliana (Mouse-ear cress), this protein is Classical arabinogalactan protein 25 (AGP25).